The chain runs to 152 residues: UPF0178 protein CKL_3490 (152 aa).

Belongs to the UPF0178 family.

The protein is UPF0178 protein CKL_3490 of Clostridium kluyveri (strain ATCC 8527 / DSM 555 / NBRC 12016 / NCIMB 10680 / K1).